The following is a 464-amino-acid chain: tRNA modification GTPase MnmE (464 aa).

Residues Arg29, Glu91, and Arg131 each contribute to the (6S)-5-formyl-5,6,7,8-tetrahydrofolate site. In terms of domain architecture, TrmE-type G spans 226–387; it reads GLKVALAGKP…LINYLLKKCG (162 aa). Asn236 serves as a coordination point for K(+). GTP contacts are provided by residues 236 to 241, 255 to 261, and 280 to 283; these read NVGKSS, TDLPGTT, and DTAG. Ser240 serves as a coordination point for Mg(2+). Thr255, Leu257, and Thr260 together coordinate K(+). A Mg(2+)-binding site is contributed by Thr261. Position 464 (Lys464) interacts with (6S)-5-formyl-5,6,7,8-tetrahydrofolate.

Belongs to the TRAFAC class TrmE-Era-EngA-EngB-Septin-like GTPase superfamily. TrmE GTPase family. As to quaternary structure, homodimer. Heterotetramer of two MnmE and two MnmG subunits. The cofactor is K(+).

Its subcellular location is the cytoplasm. Functionally, exhibits a very high intrinsic GTPase hydrolysis rate. Involved in the addition of a carboxymethylaminomethyl (cmnm) group at the wobble position (U34) of certain tRNAs, forming tRNA-cmnm(5)s(2)U34. This is tRNA modification GTPase MnmE from Prochlorococcus marinus (strain NATL1A).